Reading from the N-terminus, the 227-residue chain is MKLTLKVSGKFFDEENSENLSLLRDVIIDLVNNGHRVAVVTGGGGTARRYISMGRKLNLNESHLDILGILVSRLNAQLLLFSLDNIAYPKVPESIEDFNERWASGKVVITGGFQPGQSTAGVAALVSEIINADYLVLATNVNGVYTKDPQKFVDAKLLPKLTVSELKTILEGSQSVNAGKYELLDPLAIKIVERSKIKVLVINFKDLNKLPNILKGNEILGSVVVPE.

Residue Lys-6–Lys-10 coordinates ATP. Gly-43 is a UMP binding site. Gly-44 and Arg-48 together coordinate ATP. Residues Asp-65 and Phe-113–Thr-119 contribute to the UMP site. Positions 139, 140, 145, and 148 each coordinate ATP.

It belongs to the UMP kinase family. Homohexamer.

It localises to the cytoplasm. It carries out the reaction UMP + ATP = UDP + ADP. It functions in the pathway pyrimidine metabolism; CTP biosynthesis via de novo pathway; UDP from UMP (UMPK route): step 1/1. Its activity is regulated as follows. Inhibited by UTP. Functionally, catalyzes the reversible phosphorylation of UMP to UDP. The polypeptide is Uridylate kinase (Sulfolobus acidocaldarius (strain ATCC 33909 / DSM 639 / JCM 8929 / NBRC 15157 / NCIMB 11770)).